The following is a 376-amino-acid chain: Carboxylic ester hydrolase LipN (376 aa).

Active-site residues include S216, D316, and H346.

It belongs to the 'GDXG' lipolytic enzyme family.

It is found in the cytoplasm. It catalyses the reaction a carboxylic ester + H2O = an alcohol + a carboxylate + H(+). It carries out the reaction an acetyl ester + H2O = an aliphatic alcohol + acetate + H(+). The catalysed reaction is a butanoate ester + H2O = an aliphatic alcohol + butanoate + H(+). The enzyme catalyses an octanoate ester + H2O = an aliphatic alcohol + octanoate + H(+). It catalyses the reaction decanoate ester + H2O = decanoate + an aliphatic alcohol + H(+). It carries out the reaction a dodecanoate ester + H2O = an aliphatic alcohol + dodecanoate + H(+). The catalysed reaction is 1,2,3-tributanoylglycerol + H2O = dibutanoylglycerol + butanoate + H(+). The enzyme catalyses 4-acetoxyphenol + H2O = hydroquinone + acetate + H(+). Its activity is regulated as follows. Completely inhibited by tetrahydrolipstatin (THL), RHC-80267 and N-bromosuccinimide. In terms of biological role, non specific carboxylic ester hydrolase. Hydrolyzes various pNP-esters, with a preference for short carbon chain substrates. Can also hydrolyze tributyrin to di- and monobutyrin and 4-hydroxyphenylacetate to hydroquinone. The protein is Carboxylic ester hydrolase LipN of Mycobacterium tuberculosis (strain ATCC 25618 / H37Rv).